Consider the following 723-residue polypeptide: Fatty acid oxidation complex subunit alpha (723 aa).

Residues 1 to 189 (MIYQANTLQV…KVGLLDAIVE (189 aa)) form an enoyl-CoA hydratase/isomerase region. Position 296 (aspartate 296) interacts with substrate. The segment at 311–723 (NKATERAAVL…FYDGQQASSL (413 aa)) is 3-hydroxyacyl-CoA dehydrogenase. Residues methionine 325, aspartate 344, 401–403 (VVE), lysine 408, and serine 430 contribute to the NAD(+) site. Histidine 451 (for 3-hydroxyacyl-CoA dehydrogenase activity) is an active-site residue. Asparagine 454 lines the NAD(+) pocket. Asparagine 501 and tyrosine 661 together coordinate substrate.

This sequence in the N-terminal section; belongs to the enoyl-CoA hydratase/isomerase family. In the C-terminal section; belongs to the 3-hydroxyacyl-CoA dehydrogenase family. Heterotetramer of two alpha chains (FadB) and two beta chains (FadA).

The enzyme catalyses a (3S)-3-hydroxyacyl-CoA + NAD(+) = a 3-oxoacyl-CoA + NADH + H(+). The catalysed reaction is a (3S)-3-hydroxyacyl-CoA = a (2E)-enoyl-CoA + H2O. It carries out the reaction a 4-saturated-(3S)-3-hydroxyacyl-CoA = a (3E)-enoyl-CoA + H2O. It catalyses the reaction (3S)-3-hydroxybutanoyl-CoA = (3R)-3-hydroxybutanoyl-CoA. The enzyme catalyses a (3Z)-enoyl-CoA = a 4-saturated (2E)-enoyl-CoA. The catalysed reaction is a (3E)-enoyl-CoA = a 4-saturated (2E)-enoyl-CoA. It functions in the pathway lipid metabolism; fatty acid beta-oxidation. Involved in the aerobic and anaerobic degradation of long-chain fatty acids via beta-oxidation cycle. Catalyzes the formation of 3-oxoacyl-CoA from enoyl-CoA via L-3-hydroxyacyl-CoA. It can also use D-3-hydroxyacyl-CoA and cis-3-enoyl-CoA as substrate. This is Fatty acid oxidation complex subunit alpha from Vibrio atlanticus (strain LGP32) (Vibrio splendidus (strain Mel32)).